Consider the following 324-residue polypeptide: Succinylglutamate desuccinylase (324 aa).

The Zn(2+) site is built by His53, Glu56, and His148. Glu211 is a catalytic residue.

Belongs to the AspA/AstE family. Succinylglutamate desuccinylase subfamily. The cofactor is Zn(2+).

It carries out the reaction N-succinyl-L-glutamate + H2O = L-glutamate + succinate. It functions in the pathway amino-acid degradation; L-arginine degradation via AST pathway; L-glutamate and succinate from L-arginine: step 5/5. In terms of biological role, transforms N(2)-succinylglutamate into succinate and glutamate. The chain is Succinylglutamate desuccinylase from Acinetobacter baumannii (strain AB0057).